Consider the following 449-residue polypeptide: MREILSIHIGQAGAQVGNACWELYCLEHGIKPDGQMPSDKSVGGGDDAFNTFFSETSSGKHVPRAIFLDLEPTVIDEIRTGTYRQLFHPEQLITGKEDAANNYARGHYTVGKELVDLCLDRVRKLADQCSGLQGFLVFHSVGGGTGSGFGSLLLERLSVDYGKKSKLDFCVYPSPQVSTAVVEPYNSVLSTHGLLEHTDVAFMLDNEAIYDLCKRSLDIERPSYANLNRLVAQVISSLTTSLRFDGALNVDITEFQTNLVPYPRIHFMLASYAPVISAEKAFHEQLSVAELTNTVFDPSSMMAKCDPRHGKYMACCLMYRGDVVPKDVNAAVAVIKTKRTIQFVDWCPTGFKCGINYQPPSVVPGGDLAKVQRALCMISNTTAIAEVFSRIDHKFDLMYAKRAFVHWYVGEGMEEVEFSEAREDLAALEKDYEEVGAETAEDDGADEEM.

Gln11 is a GTP binding site. Lys40 carries the N6-acetyllysine modification. GTP contacts are provided by Glu71, Ser140, Gly144, Thr145, Thr179, Asn206, and Asn228. Glu71 is a Mg(2+) binding site. Residue Glu254 is part of the active site.

It belongs to the tubulin family. Dimer of alpha and beta chains. A typical microtubule is a hollow water-filled tube with an outer diameter of 25 nm and an inner diameter of 15 nM. Alpha-beta heterodimers associate head-to-tail to form protofilaments running lengthwise along the microtubule wall with the beta-tubulin subunit facing the microtubule plus end conferring a structural polarity. Microtubules usually have 13 protofilaments but different protofilament numbers can be found in some organisms and specialized cells. It depends on Mg(2+) as a cofactor. Post-translationally, acetylation of alpha chains at Lys-40 stabilizes microtubules and affects affinity and processivity of microtubule motors. This modification has a role in multiple cellular functions, ranging from cell motility, cell cycle progression or cell differentiation to intracellular trafficking and signaling.

Its subcellular location is the cytoplasm. The protein resides in the cytoskeleton. The protein localises to the spindle. It localises to the nucleus. The catalysed reaction is GTP + H2O = GDP + phosphate + H(+). Functionally, tubulin is the major constituent of microtubules, a cylinder consisting of laterally associated linear protofilaments composed of alpha- and beta-tubulin heterodimers. Microtubules grow by the addition of GTP-tubulin dimers to the microtubule end, where a stabilizing cap forms. Below the cap, tubulin dimers are in GDP-bound state, owing to GTPase activity of alpha-tubulin. This chain is Tubulin alpha-2B chain (ALTBE), found in Physarum polycephalum (Slime mold).